We begin with the raw amino-acid sequence, 426 residues long: Gamma-glutamyl phosphate reductase (426 aa).

The protein belongs to the gamma-glutamyl phosphate reductase family.

The protein localises to the cytoplasm. The enzyme catalyses L-glutamate 5-semialdehyde + phosphate + NADP(+) = L-glutamyl 5-phosphate + NADPH + H(+). It participates in amino-acid biosynthesis; L-proline biosynthesis; L-glutamate 5-semialdehyde from L-glutamate: step 2/2. In terms of biological role, catalyzes the NADPH-dependent reduction of L-glutamate 5-phosphate into L-glutamate 5-semialdehyde and phosphate. The product spontaneously undergoes cyclization to form 1-pyrroline-5-carboxylate. The protein is Gamma-glutamyl phosphate reductase of Cupriavidus taiwanensis (strain DSM 17343 / BCRC 17206 / CCUG 44338 / CIP 107171 / LMG 19424 / R1) (Ralstonia taiwanensis (strain LMG 19424)).